The sequence spans 666 residues: ATP-dependent RNA helicase MSS116, mitochondrial (666 aa).

Residues 1–22 (MLRHCSLGLVTTQISAIAPLRL) constitute a mitochondrion transit peptide. Positions 38-60 (RDRRSSRSREDKPYNSRTRRFDD) are enriched in basic and acidic residues. Residues 38 to 131 (RDRRSSRSRE…KSYSKGGNTS (94 aa)) form a disordered region. Residues 120 to 131 (NTKSYSKGGNTS) show a composition bias toward polar residues. The short motif at 159–187 (SLLEKNVISRDLYDSISRMGFEQLTPVQQ) is the Q motif element. One can recognise a Helicase ATP-binding domain in the interval 192–379 (PIITNSDSDI…NDIMNKEECL (188 aa)). 205 to 212 (AKTGTGKT) contributes to the ATP binding site. The DEAD box motif lies at 320–323 (DEAD). The Helicase C-terminal domain maps to 408-560 (NLYAAIEHIR…NIRKFEAQPH (153 aa)).

The protein belongs to the DEAD box helicase family. DDX18/HAS1 subfamily.

Its subcellular location is the mitochondrion matrix. The catalysed reaction is ATP + H2O = ADP + phosphate + H(+). Functionally, ATP-dependent RNA helicase required for mitochondrial splicing of group I and II introns. Also required for efficient mitochondrial translation. The polypeptide is ATP-dependent RNA helicase MSS116, mitochondrial (MSS116) (Candida glabrata (strain ATCC 2001 / BCRC 20586 / JCM 3761 / NBRC 0622 / NRRL Y-65 / CBS 138) (Yeast)).